Here is a 188-residue protein sequence, read N- to C-terminus: UPF0301 protein azo3459 (188 aa).

It belongs to the UPF0301 (AlgH) family.

The protein is UPF0301 protein azo3459 of Azoarcus sp. (strain BH72).